The chain runs to 541 residues: Chaperonin GroEL (541 aa).

Residues 29–32 (TLGP), 86–90 (DGTTT), Gly-413, 478–480 (NAA), and Asp-494 each bind ATP.

The protein belongs to the chaperonin (HSP60) family. In terms of assembly, forms a cylinder of 14 subunits composed of two heptameric rings stacked back-to-back. Interacts with the co-chaperonin GroES.

It is found in the cytoplasm. It carries out the reaction ATP + H2O + a folded polypeptide = ADP + phosphate + an unfolded polypeptide.. Functionally, together with its co-chaperonin GroES, plays an essential role in assisting protein folding. The GroEL-GroES system forms a nano-cage that allows encapsulation of the non-native substrate proteins and provides a physical environment optimized to promote and accelerate protein folding. The protein is Chaperonin GroEL of Agathobacter rectalis (strain ATCC 33656 / DSM 3377 / JCM 17463 / KCTC 5835 / VPI 0990) (Eubacterium rectale).